We begin with the raw amino-acid sequence, 88 residues long: Small ribosomal subunit protein bS20 (88 aa).

The segment covering 1–11 (MANIKSSEKDI) has biased composition (basic and acidic residues). Disordered regions lie at residues 1–31 (MANI…LRTQ) and 69–88 (SKNA…SSAA).

This sequence belongs to the bacterial ribosomal protein bS20 family.

Binds directly to 16S ribosomal RNA. This Leptospira interrogans serogroup Icterohaemorrhagiae serovar copenhageni (strain Fiocruz L1-130) protein is Small ribosomal subunit protein bS20.